A 785-amino-acid chain; its full sequence is Protein kintoun (785 aa).

Composition is skewed to basic and acidic residues over residues 622–638 and 662–679; these read EHNEQCTDHSESERDTS and HNIELGREHTSERDKEPK. Disordered regions lie at residues 622-698 and 719-749; these read EHNE…DSHL and KSSVQTTQESDLDEDDMPDNSDHLQNSASSN. Residues 681-695 show a composition bias toward polar residues; that stretch reads TSCTAESTSGQQPND. A compositionally biased stretch (acidic residues) spans 728 to 737; that stretch reads SDLDEDDMPD.

The protein belongs to the PIH1 family. Kintoun subfamily.

The protein resides in the cytoplasm. The protein localises to the dynein axonemal particle. Functionally, required for cytoplasmic pre-assembly of axonemal dyneins, thereby playing a central role in motility in cilia and flagella. Involved in pre-assembly of dynein arm complexes in the cytoplasm before intraflagellar transport loads them for the ciliary compartment. The polypeptide is Protein kintoun (Xenopus tropicalis (Western clawed frog)).